We begin with the raw amino-acid sequence, 356 residues long: Sterol-4-alpha-carboxylate 3-dehydrogenase, decarboxylating (356 aa).

Met1 bears the N-acetylmethionine mark. Residue Tyr155 is the Proton acceptor of the active site. Lys159 contributes to the NAD(+) binding site. Residues 281–301 (WLAYYLALLVSLLVMVISPVI) traverse the membrane as a helical segment. The Prevents secretion from ER motif lies at 353–356 (RKVM).

The protein belongs to the 3-beta-HSD family. In terms of assembly, homodimer.

It is found in the endoplasmic reticulum membrane. The protein localises to the lipid droplet. The enzyme catalyses a 3beta-hydroxysteroid-4alpha-carboxylate + NADP(+) = a 3-oxosteroid + CO2 + NADPH. It carries out the reaction a 3beta-hydroxysteroid-4alpha-carboxylate + NAD(+) = a 3-oxosteroid + CO2 + NADH. It catalyses the reaction 4alpha-carboxyzymosterol + NADP(+) = zymosterone + CO2 + NADPH. The catalysed reaction is 4alpha-carboxy-4beta-methyl-5alpha-cholest-8-en-3beta-ol + NADP(+) = 4alpha-methyl-5alpha-cholest-8-en-3-one + CO2 + NADPH. The enzyme catalyses 4alpha-carboxy-5alpha-cholest-8-ene-3beta-ol + NADP(+) = 5alpha-cholest-8-en-3-one + CO2 + NADPH. It carries out the reaction 4beta-methylzymosterol-4alpha-carboxylate + NADP(+) = 3-dehydro-4-methylzymosterol + CO2 + NADPH. It catalyses the reaction 4beta-methylzymosterol-4alpha-carboxylate + NAD(+) = 3-dehydro-4-methylzymosterol + CO2 + NADH. The catalysed reaction is 4alpha-carboxy-5alpha-cholest-8-ene-3beta-ol + NAD(+) = 5alpha-cholest-8-en-3-one + CO2 + NADH. The enzyme catalyses 4alpha-carboxy-4beta-methyl-5alpha-cholest-8-en-3beta-ol + NAD(+) = 4alpha-methyl-5alpha-cholest-8-en-3-one + CO2 + NADH. It carries out the reaction 4alpha-carboxyzymosterol + NAD(+) = zymosterone + CO2 + NADH. It functions in the pathway steroid biosynthesis; zymosterol biosynthesis; zymosterol from lanosterol: step 4/6. Its function is as follows. Catalyzes the NAD(P)(+)-dependent oxidative decarboxylation of the C4 methyl groups of 4-alpha-carboxysterols in post-squalene cholesterol biosynthesis. Also plays a role in the regulation of the endocytic trafficking of EGFR. The sequence is that of Sterol-4-alpha-carboxylate 3-dehydrogenase, decarboxylating (NSDHL) from Bos taurus (Bovine).